We begin with the raw amino-acid sequence, 49 residues long: Large ribosomal subunit protein bL33B (49 aa).

The protein belongs to the bacterial ribosomal protein bL33 family.

This Bacillus anthracis protein is Large ribosomal subunit protein bL33B.